The chain runs to 125 residues: MRKGCFGLVSLVLLLLVGCRSHPEIPVNDEQSLVMESSLLAAGISAEKPFLSTSDIQPSASSTLYNERQEPVTVHYRFYWYDARGLEMHPLERPRSVTIPAHSAVTLYGSANFLGAHKVRLYLYL.

This is an uncharacterized protein from Escherichia coli (strain K12).